The primary structure comprises 557 residues: Protein PNS1 (557 aa).

Residues 1–58 (MSTEKQYQPQQPPPAYTGQGPDNGNAYGYPESYGKTETHSGDSCSGDTSMNPQQQGQQ) form a disordered region. The Cytoplasmic portion of the chain corresponds to 1–99 (MSTEKQYQPQ…DNNKPKFNDW (99 aa)). Over residues 41–58 (GDSCSGDTSMNPQQQGQQ) the composition is skewed to polar residues. A helical transmembrane segment spans residues 100-120 (PFIIVFLLTLCGFIVVASLTL). Residues 121 to 147 (RAWSQTYSSTGSGIYHDFDTGTLNTNS) lie on the Extracellular side of the membrane. The helical transmembrane segment at 148–168 (VILLVFSVVIAIFFAFIGIVL) threads the bilayer. Topologically, residues 169-174 (CRAYPK) are cytoplasmic. A helical transmembrane segment spans residues 175 to 195 (FFIYAGMIVNILAALGTAIMY). Residues 196–200 (MSLKY) are Extracellular-facing. A helical membrane pass occupies residues 201-221 (WSAGIVFLIFTFMTAWCYWGM). Over 222-246 (RSRIPLTVAILRVIVLAMKNCPQSL) the chain is Cytoplasmic. Residues 247 to 267 (FVSFFGTIVASAFAMLFSTVV) traverse the membrane as a helical segment. Topologically, residues 268 to 292 (VATYMKYDPSNTNSGCNVSGGDCSH) are extracellular. Residue asparagine 284 is glycosylated (N-linked (GlcNAc...) asparagine). Residues 293–313 (AKLIGVLVVVFFCGYYISEVI) traverse the membrane as a helical segment. Residues 314–350 (RNVMHCTVSGVFGSWYYRYKSDQGMPKWPAMGAFKRA) are Cytoplasmic-facing. The chain crosses the membrane as a helical span at residues 351–371 (MTYSFGSICFGSLIVSIIETF). The Extracellular portion of the chain corresponds to 372–393 (RQLLQLGKQAAIASTDNANWIR). A helical transmembrane segment spans residues 394–414 (IIFWLIDMLVGFIQWIAQYFN). Residues 415 to 454 (HYAYCIIALYGKPYLKAAKQTWYMFREKGIDALINDNLVN) are Cytoplasmic-facing. A helical transmembrane segment spans residues 455–475 (VALGFYSLFASYMSCLFAFLY). The Extracellular segment spans residues 476–488 (LRFTKPGYNSDGD). The helical transmembrane segment at 489–509 (FNAPLMAFAFVIALQLTNIAN) threads the bilayer. Residues 510–557 (ETIRSGCATFFTALGHDPEVFQAQYPDRFDEIFRSYPQVLNKLTHQDV) are Cytoplasmic-facing.

Belongs to the CTL (choline transporter-like) family.

The protein resides in the cell membrane. In terms of biological role, probably involved in transport through the plasma membrane. This is Protein PNS1 (PNS1) from Candida glabrata (strain ATCC 2001 / BCRC 20586 / JCM 3761 / NBRC 0622 / NRRL Y-65 / CBS 138) (Yeast).